The primary structure comprises 230 residues: Androgen-dependent TFPI-regulating protein (230 aa).

Residues 1–7 lie on the Cytoplasmic side of the membrane; sequence MTKTTTC. The helical transmembrane segment at 8 to 28 threads the bilayer; that stretch reads VYHFLVLNWYIFLNYHIPQIG. Residues 29-45 lie on the Extracellular side of the membrane; that stretch reads RNEEKLREFHDGGRSKY. The chain crosses the membrane as a helical span at residues 46-66; the sequence is LTLLNLLLQAIFFGVACLDDV. The Cytoplasmic segment spans residues 67–85; that stretch reads LKRVIGRKDIKFVTSFRDL. The helical transmembrane segment at 86-106 threads the bilayer; the sequence is LFTTMAFPISTFVFLVFWTLF. Residues 107–120 lie on the Extracellular side of the membrane; sequence HYDRSLVYPKGLDD. A helical transmembrane segment spans residues 121–141; that stretch reads FFPAWVNHAMHTSIFPFSLFE. The Cytoplasmic segment spans residues 142-154; that stretch reads TILRPHNYPSKKL. A helical membrane pass occupies residues 155–175; the sequence is GLTLLGAFNFAYIIRILWRYV. The Extracellular segment spans residues 176-190; the sequence is QTGNWVYPVFDSLSP. The chain crosses the membrane as a helical span at residues 191 to 211; the sequence is LGIIIFFSAAYILVAGIYLFG. Residues 212–230 are Cytoplasmic-facing; that stretch reads EKINHWKWGAIAKPQMKKN.

This sequence belongs to the AIG1 family.

Its subcellular location is the cell membrane. It carries out the reaction 9-hexadecanoyloxy-octadecanoate + H2O = 9-hydroxy-octadecanoate + hexadecanoate + H(+). It catalyses the reaction 12-hexadecanoyloxy-octadecanoate + H2O = 12-hydroxyoctadecanoate + hexadecanoate + H(+). The catalysed reaction is 9-(9Z-hexadecenoyloxy)-octadecanoate + H2O = (9Z)-hexadecenoate + 9-hydroxy-octadecanoate + H(+). The enzyme catalyses 12-(9Z-hexadecenoyloxy)-octadecanoate + H2O = 12-hydroxyoctadecanoate + (9Z)-hexadecenoate + H(+). It carries out the reaction 13-(9Z-hexadecenoyloxy)-octadecanoate + H2O = 13-hydroxy-octadecanoate + (9Z)-hexadecenoate + H(+). It catalyses the reaction 9-octadecanoyloxy-octadecanoate + H2O = 9-hydroxy-octadecanoate + octadecanoate + H(+). The catalysed reaction is 12-octadecanoyloxy-octadecanoate + H2O = 12-hydroxyoctadecanoate + octadecanoate + H(+). The enzyme catalyses 13-octadecanoyloxy-octadecanoate + H2O = 13-hydroxy-octadecanoate + octadecanoate + H(+). It carries out the reaction 9-(9Z-octadecenoyloxy)-octadecanoate + H2O = 9-hydroxy-octadecanoate + (9Z)-octadecenoate + H(+). It catalyses the reaction 12-(9Z-octadecenoyloxy)-octadecanoate + H2O = 12-hydroxyoctadecanoate + (9Z)-octadecenoate + H(+). The catalysed reaction is 13-(9Z-octadecenoyloxy)-octadecanoate + H2O = 13-hydroxy-octadecanoate + (9Z)-octadecenoate + H(+). The enzyme catalyses 5-(9Z-octadecenoyloxy)-octadecanoate + H2O = 5-hydroxy-octadecanoate + (9Z)-octadecenoate + H(+). Its function is as follows. Hydrolyzes bioactive fatty-acid esters of hydroxy-fatty acids (FAHFAs), but not other major classes of lipids. Shows a preference for FAHFAs with branching distal from the carboxylate head group of the lipids. Regulates the expression and the cell-associated anticoagulant activity of the inhibitor TFPI in endothelial cells (in vitro). This chain is Androgen-dependent TFPI-regulating protein (Adtrp), found in Mus musculus (Mouse).